The sequence spans 1202 residues: PAN2-PAN3 deadenylation complex catalytic subunit PAN2 (1202 aa).

WD repeat units follow at residues 153-193 (DENE…QKYA), 195-231 (ETPG…VEHE), 244-280 (VHGN…AITP), and 328-367 (PVGP…SFNP). Residues 368 to 485 (YSRETEFALP…VGREEEPHLH (118 aa)) are linker. Residues 486 to 924 (MVSKKYRKVT…VPAILYYVKR (439 aa)) form the USP domain. Ser791 carries the phosphoserine modification. Residues 975–1147 (VGLDAEFVTL…EDARTALQLY (173 aa)) form the Exonuclease domain. A divalent metal cation contacts are provided by Asp978, Glu980, Asp1087, and Asp1139. Position 1189 is a phosphoserine (Ser1189).

It belongs to the peptidase C19 family. PAN2 subfamily. As to quaternary structure, forms a heterotrimer with an asymmetric homodimer of the regulatory subunit PAN3 to form the poly(A)-nuclease (PAN) deadenylation complex. Interacts with PAN3 isoform 1/Pan3L and isoform 3/Pan3S. Interacts with ZFP36. It depends on a divalent metal cation as a cofactor.

It is found in the cytoplasm. It localises to the P-body. Its subcellular location is the nucleus. The catalysed reaction is Exonucleolytic cleavage of poly(A) to 5'-AMP.. Its activity is regulated as follows. Positively regulated by the regulatory subunit PAN3. Its function is as follows. Catalytic subunit of the poly(A)-nuclease (PAN) deadenylation complex, one of two cytoplasmic mRNA deadenylases involved in general and miRNA-mediated mRNA turnover. PAN specifically shortens poly(A) tails of RNA and the activity is stimulated by poly(A)-binding protein (PABP). PAN deadenylation is followed by rapid degradation of the shortened mRNA tails by the CCR4-NOT complex. Deadenylated mRNAs are then degraded by two alternative mechanisms, namely exosome-mediated 3'-5' exonucleolytic degradation, or deadenylation-dependent mRNA decaping and subsequent 5'-3' exonucleolytic degradation by XRN1. Also acts as an important regulator of the HIF1A-mediated hypoxic response. Required for HIF1A mRNA stability independent of poly(A) tail length regulation. The protein is PAN2-PAN3 deadenylation complex catalytic subunit PAN2 of Homo sapiens (Human).